The following is a 241-amino-acid chain: Phosphoadenosine 5'-phosphosulfate reductase (241 aa).

Residues 221-241 (GADPRSGRWRGKAKTECGLHA) form a disordered region. The active-site Nucleophile; cysteine thiosulfonate intermediate is the Cys237.

Belongs to the PAPS reductase family. CysH subfamily.

The protein localises to the cytoplasm. It carries out the reaction [thioredoxin]-disulfide + sulfite + adenosine 3',5'-bisphosphate + 2 H(+) = [thioredoxin]-dithiol + 3'-phosphoadenylyl sulfate. The protein operates within sulfur metabolism; hydrogen sulfide biosynthesis; sulfite from sulfate: step 3/3. In terms of biological role, catalyzes the formation of sulfite from phosphoadenosine 5'-phosphosulfate (PAPS) using thioredoxin as an electron donor. This chain is Phosphoadenosine 5'-phosphosulfate reductase, found in Gloeobacter violaceus (strain ATCC 29082 / PCC 7421).